A 118-amino-acid chain; its full sequence is Ribonuclease P protein component (118 aa).

The protein belongs to the RnpA family. In terms of assembly, consists of a catalytic RNA component (M1 or rnpB) and a protein subunit.

It catalyses the reaction Endonucleolytic cleavage of RNA, removing 5'-extranucleotides from tRNA precursor.. In terms of biological role, RNaseP catalyzes the removal of the 5'-leader sequence from pre-tRNA to produce the mature 5'-terminus. It can also cleave other RNA substrates such as 4.5S RNA. The protein component plays an auxiliary but essential role in vivo by binding to the 5'-leader sequence and broadening the substrate specificity of the ribozyme. In Levilactobacillus brevis (strain ATCC 367 / BCRC 12310 / CIP 105137 / JCM 1170 / LMG 11437 / NCIMB 947 / NCTC 947) (Lactobacillus brevis), this protein is Ribonuclease P protein component.